We begin with the raw amino-acid sequence, 227 residues long: UPF0758 protein SSA_1218 (227 aa).

Residues 104 to 226 form the MPN domain; sequence QIMGSQKLAR…YYSYREETDM (123 aa). His175, His177, and Asp188 together coordinate Zn(2+). Residues 175–188 carry the JAMM motif motif; the sequence is HNHPSGSVVPSRND.

It belongs to the UPF0758 family.

This Streptococcus sanguinis (strain SK36) protein is UPF0758 protein SSA_1218.